Consider the following 126-residue polypeptide: Ribonuclease P protein component (126 aa).

It belongs to the RnpA family. Consists of a catalytic RNA component (M1 or rnpB) and a protein subunit.

The catalysed reaction is Endonucleolytic cleavage of RNA, removing 5'-extranucleotides from tRNA precursor.. Its function is as follows. RNaseP catalyzes the removal of the 5'-leader sequence from pre-tRNA to produce the mature 5'-terminus. It can also cleave other RNA substrates such as 4.5S RNA. The protein component plays an auxiliary but essential role in vivo by binding to the 5'-leader sequence and broadening the substrate specificity of the ribozyme. This is Ribonuclease P protein component from Synechococcus sp. (strain JA-3-3Ab) (Cyanobacteria bacterium Yellowstone A-Prime).